A 115-amino-acid polypeptide reads, in one-letter code: Parathyroid hormone (115 aa).

The signal sequence occupies residues 1–25 (MMSANTVAKVMIIMLAVCLLTQTDG). Residues 26 to 31 (KPVRKR) constitute a propeptide that is removed on maturation. An important for receptor binding region spans residues 51 to 69 (RMQWLRRKLQDMHNFVSLG).

Belongs to the parathyroid hormone family. Interacts with PTH1R (via N-terminal extracellular domain). In terms of tissue distribution, highly expressed in the parathyroid gland. Also expressed in the placenta, thymus and testis.

It localises to the secreted. Functionally, parathyroid hormone elevates calcium level by dissolving the salts in bone and preventing their renal excretion. Acts by binding to its receptor, PTH1R, activating G protein-coupled receptor signaling. Stimulates [1-14C]-2-deoxy-D-glucose (2DG) transport and glycogen synthesis in osteoblastic cells. In Mus musculus (Mouse), this protein is Parathyroid hormone.